Consider the following 459-residue polypeptide: NADH oxidase (459 aa).

Position 10 (Asn10) interacts with FAD. His11 serves as the catalytic Proton acceptor. FAD contacts are provided by Ala12, Asp34, Gln35, Cys44, Val81, Ala110, Ser113, Lys143, and Tyr172. Cys44 functions as the Redox-active in the catalytic mechanism. Cys44 carries the post-translational modification Cysteine sulfinic acid (-SO2H). NAD(+)-binding residues include Ile173, Asp192, Tyr201, and Gly256. Position 294 (Asp294) interacts with FAD. Ala310 is a binding site for NAD(+). FAD contacts are provided by Leu311, Ala312, and Ser313. Position 341 (Gly341) interacts with NAD(+). FAD is bound at residue Phe439.

This sequence belongs to the class-III pyridine nucleotide-disulfide oxidoreductase family. FAD serves as cofactor.

The protein localises to the secreted. It is found in the cell wall. The enzyme catalyses 2 NADH + O2 + 2 H(+) = 2 NAD(+) + 2 H2O. Functionally, catalyzes the four-electron reduction of molecular oxygen to water. Plays a role in redox balance maintenance. May be involved in mediating bacterial adhesion to host cells. May be considered a potential virulence factor. The polypeptide is NADH oxidase (Streptococcus pneumoniae serotype 4 (strain ATCC BAA-334 / TIGR4)).